A 207-amino-acid polypeptide reads, in one-letter code: Alpha-1-acid glycoprotein 2 (207 aa).

A signal peptide spans 1–18 (MALHMILVMVSLLPLLEA). A Pyrrolidone carboxylic acid modification is found at Gln19. N-linked (GlcNAc...) asparagine glycans are attached at residues Asn25, Asn34, Asn76, Asn94, and Asn104. Cys91 and Cys184 are joined by a disulfide. The interval 188–207 (EKQQLELEKETKKDPEEGQA) is disordered.

This sequence belongs to the calycin superfamily. Lipocalin family. Expressed by the liver and secreted in plasma.

The protein resides in the secreted. Its function is as follows. Functions as a transport protein in the blood stream. Binds various ligands in the interior of its beta-barrel domain. Appears to function in modulating the activity of the immune system during the acute-phase reaction. The sequence is that of Alpha-1-acid glycoprotein 2 (Orm2) from Mus musculus (Mouse).